A 58-amino-acid chain; its full sequence is Ribulose bisphosphate carboxylase large chain (58 aa).

A propeptide spanning residues 1–2 (MS) is cleaved from the precursor. Residue Pro3 is modified to N-acetylproline. Lys14 is modified (N6,N6,N6-trimethyllysine).

Belongs to the RuBisCO large chain family. Type I subfamily. As to quaternary structure, heterohexadecamer of 8 large chains and 8 small chains.

Its subcellular location is the plastid. The protein resides in the chloroplast. The enzyme catalyses 2 (2R)-3-phosphoglycerate + 2 H(+) = D-ribulose 1,5-bisphosphate + CO2 + H2O. It carries out the reaction D-ribulose 1,5-bisphosphate + O2 = 2-phosphoglycolate + (2R)-3-phosphoglycerate + 2 H(+). RuBisCO catalyzes two reactions: the carboxylation of D-ribulose 1,5-bisphosphate, the primary event in carbon dioxide fixation, as well as the oxidative fragmentation of the pentose substrate in the photorespiration process. Both reactions occur simultaneously and in competition at the same active site. The sequence is that of Ribulose bisphosphate carboxylase large chain (rbcL) from Weinmannia silvicola (Towai).